Here is a 574-residue protein sequence, read N- to C-terminus: UvrABC system protein C (574 aa).

Residues 12–92 form the GIY-YIG domain; sequence KKPGVYIFKN…IYIHKPKYNI (81 aa). The UVR domain occupies 200-235; sequence EEVKNYLQKAMMDYAKIKNYEKAAQMRDTLFKLENL.

Belongs to the UvrC family. In terms of assembly, interacts with UvrB in an incision complex.

Its subcellular location is the cytoplasm. Functionally, the UvrABC repair system catalyzes the recognition and processing of DNA lesions. UvrC both incises the 5' and 3' sides of the lesion. The N-terminal half is responsible for the 3' incision and the C-terminal half is responsible for the 5' incision. This is UvrABC system protein C from Petrotoga mobilis (strain DSM 10674 / SJ95).